The sequence spans 262 residues: Co-chaperone protein DjlA (262 aa).

The Periplasmic segment spans residues 1 to 6 (MRFWGK). Residues 7–30 (FFGFVIGFMFGRFFGALLGLWLGH) traverse the membrane as a helical segment. Topologically, residues 31–262 (LYDKRPGGGA…DRVKSERGMR (232 aa)) are cytoplasmic. Positions 196-262 (DAYHLLGITA…DRVKSERGMR (67 aa)) constitute a J domain.

Homodimer.

The protein localises to the cell inner membrane. Its function is as follows. Regulatory DnaK co-chaperone. Direct interaction between DnaK and DjlA is needed for the induction of the wcaABCDE operon, involved in the synthesis of a colanic acid polysaccharide capsule, possibly through activation of the RcsB/RcsC phosphotransfer signaling pathway. The colanic acid capsule may help the bacterium survive conditions outside the host. The polypeptide is Co-chaperone protein DjlA (Shewanella oneidensis (strain ATCC 700550 / JCM 31522 / CIP 106686 / LMG 19005 / NCIMB 14063 / MR-1)).